The chain runs to 446 residues: Glutamine synthetase (446 aa).

Residues 18 to 103 (ENVRYLRLQF…LICDVYKTDG (86 aa)) form the GS beta-grasp domain. Residues 110–446 (PRANLKRVLK…WERDQYMKQY (337 aa)) form the GS catalytic domain. Mg(2+) contacts are provided by Glu134 and Glu136. Glu186 serves as a coordination point for ATP. The Mg(2+) site is built by Glu191 and Glu198. L-glutamate is bound by residues 242 to 243 (NG) and Gly243. His247 provides a ligand contact to Mg(2+). Residue Ser251 participates in ATP binding. L-glutamate is bound by residues Arg300, Glu306, and Arg318. ATP contacts are provided by Arg318 and Arg323. Glu335 serves as a coordination point for Mg(2+). An L-glutamate-binding site is contributed by Arg337.

The protein belongs to the glutamine synthetase family. Oligomer of 12 subunits arranged in the form of two hexagons. In its feedback-inhibited form, interacts with TnrA in order to block its DNA-binding activity. Requires Mg(2+) as cofactor.

The protein resides in the cytoplasm. The enzyme catalyses L-glutamate + NH4(+) + ATP = L-glutamine + ADP + phosphate + H(+). Its activity is regulated as follows. Inhibited by glutamine. Functionally, glutamine synthetase (GS) is an unusual multitasking protein that functions as an enzyme, a transcription coregulator, and a chaperone in ammonium assimilation and in the regulation of genes involved in nitrogen metabolism. It catalyzes the ATP-dependent biosynthesis of glutamine from glutamate and ammonia. Feedback-inhibited GlnA also interacts with and regulates the activity of the transcriptional regulator TnrA. During nitrogen limitation, TnrA is in its DNA-binding active state and turns on the transcription of genes required for nitrogen assimilation. Under conditions of nitrogen excess, feedback-inhibited GlnA forms a stable complex with TnrA, which inhibits its DNA-binding activity. In contrast, feedback-inhibited GlnA acts as a chaperone to stabilize the DNA-binding activity of GlnR, which represses the transcription of nitrogen assimilation genes. In Staphylococcus aureus (strain N315), this protein is Glutamine synthetase.